The chain runs to 172 residues: R-phycocyanin beta chain (172 aa).

(2R,3E)-phycoerythrobilin is bound by residues N35 and D39. (2R,3E)-phycocyanobilin-binding positions include N72, C82, and 84 to 85 (RD). N72 is subject to N4-methylasparagine. Residues 149–151 (PAG) and C153 each bind (2R,3E)-phycoerythrobilin.

It belongs to the phycobiliprotein family. As to quaternary structure, heterododecamer of 6 alpha and 6 beta chains. The basic functional unit of phycobiliproteins is a ring-shaped hexamer formed from two back-to-back trimers contacting via the alpha chain subunits. The trimers are composed of alpha/beta subunit heterodimers arranged around a three-fold axis of symmetry. The phycoerythrins also contain a gamma subunit which is located in the center of the hexamer. Post-translationally, contains one covalently linked phycocyanobilin chromophore and one covalently linked phycoerythrobilin chromophore.

The protein resides in the plastid. It is found in the chloroplast thylakoid membrane. Functionally, light-harvesting photosynthetic tetrapyrrole chromophore-protein from the phycobiliprotein complex (phycobilisome, PBS). Phycocyanin is the major phycobiliprotein in the PBS rod. This Polysiphonia urceolata (Red alga) protein is R-phycocyanin beta chain (rpcB).